The sequence spans 617 residues: Translation initiation factor IF-2 (617 aa).

The segment covering 1–11 has biased composition (basic residues); that stretch reads MSKHKPRHFQK. The tract at residues 1–25 is disordered; sequence MSKHKPRHFQKNKFDNRAKTSAKQQ. The tr-type G domain maps to 119–288; it reads PRPPIVTIMG…ILLVAEVEDY (170 aa). Residues 128–135 are G1; it reads GHVDHGKT. Position 128–135 (128–135) interacts with GTP; it reads GHVDHGKT. The interval 153–157 is G2; the sequence is GITQK. A G3 region spans residues 175–178; the sequence is DTPG. GTP contacts are provided by residues 175-179 and 229-232; these read DTPGH and NKMD. The segment at 229-232 is G4; the sequence is NKMD. The segment at 265–267 is G5; the sequence is SAL.

The protein belongs to the TRAFAC class translation factor GTPase superfamily. Classic translation factor GTPase family. IF-2 subfamily.

It localises to the cytoplasm. In terms of biological role, one of the essential components for the initiation of protein synthesis. Protects formylmethionyl-tRNA from spontaneous hydrolysis and promotes its binding to the 30S ribosomal subunits. Also involved in the hydrolysis of GTP during the formation of the 70S ribosomal complex. The protein is Translation initiation factor IF-2 (infB) of Mycoplasma pneumoniae (strain ATCC 29342 / M129 / Subtype 1) (Mycoplasmoides pneumoniae).